Consider the following 338-residue polypeptide: Inositol 2-dehydrogenase 4 (338 aa).

Belongs to the Gfo/Idh/MocA family. In terms of assembly, homotetramer.

The catalysed reaction is myo-inositol + NAD(+) = scyllo-inosose + NADH + H(+). Its function is as follows. Involved in the oxidation of myo-inositol (MI) to 2-keto-myo-inositol (2KMI or 2-inosose). In Saccharopolyspora erythraea (strain ATCC 11635 / DSM 40517 / JCM 4748 / NBRC 13426 / NCIMB 8594 / NRRL 2338), this protein is Inositol 2-dehydrogenase 4.